The sequence spans 1158 residues: ATP-dependent helicase/deoxyribonuclease subunit B (1158 aa).

This sequence belongs to the helicase family. AddB/RexB type 2 subfamily. In terms of assembly, heterodimer of AddA and RexB. Mg(2+) serves as cofactor.

In terms of biological role, the heterodimer acts as both an ATP-dependent DNA helicase and an ATP-dependent, dual-direction single-stranded exonuclease. Recognizes the chi site generating a DNA molecule suitable for the initiation of homologous recombination. This subunit has 5' -&gt; 3' nuclease activity but not helicase activity. The polypeptide is ATP-dependent helicase/deoxyribonuclease subunit B (Lactobacillus gasseri (strain ATCC 33323 / DSM 20243 / BCRC 14619 / CIP 102991 / JCM 1131 / KCTC 3163 / NCIMB 11718 / NCTC 13722 / AM63)).